The sequence spans 365 residues: Probable G-protein coupled receptor 142 (365 aa).

Topologically, residues 1 to 66 are extracellular; it reads MHLNSNPNSY…WPESPERSPC (66 aa). N-linked (GlcNAc...) asparagine glycosylation is present at N44. The helical transmembrane segment at 67–87 threads the bilayer; sequence VAGIIPVIYYSVLLSLGLPVA. At 88 to 102 the chain is on the cytoplasmic side; it reads LARLAARTRKPSYHY. Residues 103–123 traverse the membrane as a helical segment; that stretch reads LLALTASDIVTQVIIVFVGFL. Residues 124–140 lie on the Extracellular side of the membrane; it reads LQGAVLARQVPQAVVRT. Residues 141-161 form a helical membrane-spanning segment; that stretch reads ANILEFAANHASVWIAVLFTV. The Cytoplasmic portion of the chain corresponds to 162–185; the sequence is DRYNALCRPLRHRATSSPGRTHRA. The helical transmembrane segment at 186 to 206 threads the bilayer; sequence IAAVIGVTLLTGIPFYWWLDV. Over 207–224 the chain is Extracellular; it reads WRDADPPSTMDKLLKWAH. Residues 225 to 245 traverse the membrane as a helical segment; the sequence is CLIVYFIPCNVFLVTNSAIIL. Residues 246 to 264 are Cytoplasmic-facing; it reads RLRKRGQRGLRPLVSKSTA. The helical transmembrane segment at 265–285 threads the bilayer; that stretch reads ILLGVTSLFALLWAPRIIVML. Residues 286–304 are Extracellular-facing; sequence YHLYVAPVHRDWRVHLALD. Residues 305–325 traverse the membrane as a helical segment; it reads IANMLAMLNTEVNFGLYCFIS. Over 326-365 the chain is Cytoplasmic; that stretch reads KTFRATVRQVICDVHMACALKSQPKQTVVELMLKSVGTEL.

The protein belongs to the G-protein coupled receptor 1 family.

It is found in the cell membrane. Orphan receptor. This Mus musculus (Mouse) protein is Probable G-protein coupled receptor 142 (Gpr142).